Reading from the N-terminus, the 253-residue chain is tRNA pseudouridine synthase A (253 aa).

Catalysis depends on aspartate 52, which acts as the Nucleophile. Tyrosine 111 is a substrate binding site.

The protein belongs to the tRNA pseudouridine synthase TruA family. In terms of assembly, homodimer.

It catalyses the reaction uridine(38/39/40) in tRNA = pseudouridine(38/39/40) in tRNA. In terms of biological role, formation of pseudouridine at positions 38, 39 and 40 in the anticodon stem and loop of transfer RNAs. In Methylobacterium radiotolerans (strain ATCC 27329 / DSM 1819 / JCM 2831 / NBRC 15690 / NCIMB 10815 / 0-1), this protein is tRNA pseudouridine synthase A.